Here is a 257-residue protein sequence, read N- to C-terminus: Succinate dehydrogenase subunit 5, mitochondrial (257 aa).

The transit peptide at 1–89 (MGTLGRAIHT…AMGMGQVRRF (89 aa)) directs the protein to the mitochondrion.

Component of complex II composed of eight subunits in plants: four classical SDH subunits SDH1, SDH2, SDH3 and SDH4 (a flavoprotein (FP), an iron-sulfur protein (IP), and a cytochrome b composed of a large and a small subunit.), as well as four subunits unknown in mitochondria from bacteria and heterotrophic eukaryotes.

It is found in the mitochondrion inner membrane. It functions in the pathway carbohydrate metabolism; tricarboxylic acid cycle. The chain is Succinate dehydrogenase subunit 5, mitochondrial from Arabidopsis thaliana (Mouse-ear cress).